A 76-amino-acid chain; its full sequence is Vasotab-TY3 (76 aa).

A signal peptide spans 1–21; that stretch reads MKFALFSVLVLMLIATFVAAD. In terms of domain architecture, Kazal-like spans 22 to 76; the sequence is DCPRICTSDYTPVCGTPSGGRRSANRTFANQCGLDSHNCLNKGDTYDKLHDGECK. Disulfide bonds link Cys-23-Cys-60, Cys-27-Cys-53, and Cys-35-Cys-75.

As to expression, expressed by the salivary gland.

Its subcellular location is the secreted. In terms of biological role, vasodilator protein that inhibits vasoconstriction of isolated rat femoral artery induced by phenylephrine. Since platelet aggregation and vasoconstriction are key hemostatic responses, particularly in small wounds, this protein likely participates in the antihemostatic responses during blood feeding. Blocks L-type calcium channels (Cav1/CACNA1) in left ventricular myocytes isolated from rat hearts. In Tabanus yao (Horsefly), this protein is Vasotab-TY3.